We begin with the raw amino-acid sequence, 92 residues long: LYR motif-containing protein 4A (92 aa).

Belongs to the complex I LYR family.

The protein is LYR motif-containing protein 4A (lyrm4a) of Salmo salar (Atlantic salmon).